We begin with the raw amino-acid sequence, 155 residues long: HTH-type transcriptional repressor MdtR (155 aa).

In terms of domain architecture, HTH marR-type spans 4–140 (ADQLMSDIQL…AAHITAKLAQ (137 aa)). Positions 54–77 (VSEIAERMEVKPSAVTLMADRLEQ) form a DNA-binding region, H-T-H motif.

As to quaternary structure, homodimer.

Its subcellular location is the cytoplasm. The binding of MdtR to the mdtRP promoter region is severely inhibited by adding excess concentrations of fusidic acid or novobiocin but not by actinomycin or streptomycin. Its function is as follows. Repressor of the multidrug resistance operon mdtRP. Acts by binding directly to the mdtRP promoter region, leading to the repression of its expression. The chain is HTH-type transcriptional repressor MdtR from Bacillus subtilis (strain 168).